The sequence spans 120 residues: Putative iron-sulfur cluster insertion protein ErpA (120 aa).

Iron-sulfur cluster is bound by residues C49, C113, and C115.

It belongs to the HesB/IscA family. In terms of assembly, homodimer. Requires iron-sulfur cluster as cofactor.

In terms of biological role, required for insertion of 4Fe-4S clusters. In Albidiferax ferrireducens (strain ATCC BAA-621 / DSM 15236 / T118) (Rhodoferax ferrireducens), this protein is Putative iron-sulfur cluster insertion protein ErpA.